The primary structure comprises 127 residues: Glycine cleavage system H protein (127 aa).

One can recognise a Lipoyl-binding domain in the interval 22 to 104 (KVRIGITHFA…YEKAWMIVVE (83 aa)). Position 63 is an N6-lipoyllysine (Lys63).

It belongs to the GcvH family. As to quaternary structure, the glycine cleavage system is composed of four proteins: P, T, L and H. The cofactor is (R)-lipoate.

Its function is as follows. The glycine cleavage system catalyzes the degradation of glycine. The H protein shuttles the methylamine group of glycine from the P protein to the T protein. Functionally, is also involved in protein lipoylation via its role as an octanoyl/lipoyl carrier protein intermediate. The polypeptide is Glycine cleavage system H protein (Bacillus pumilus (strain SAFR-032)).